A 511-amino-acid polypeptide reads, in one-letter code: MMKMRWLSAAVMLTLYTSSSWAFSIDDVAKQAQSLAGKGYEAPKSNLPSVFRDMKYADYQQIQFNSDKAYWSNLKTPFKLEFYHQGMYFDTPVKINEVTATTVKRIKYSPDYFNFGDVKHDKDTVKDLGFAGFKVLYPINSKDKNDEILSMLGASYFRVIGAGQVYGLSARGLAIDTALPSGEEFPRFREFWIERPKPTDKRLTIYALLDSPRATGAYRFVVMPGRDTVVDVQSKVYLRDKVGKLGVAPLTSMFLFGPNQPSPATNYRPELHDSNGLSIHAGNGEWIWRPLNNPKHLAISSYAMENPQGFGLLQRGRDFSRFEDLDDRYDLRPSAWVTPKGEWGKGKVELVEIPTNDETNDNIVAYWTPDQLPEPGKEMNFKYTITFSRDEDKLHAPDNAWVQQTRRSTGDVKQSNLIRQPDGTIAFVVDFTGTEMKKLPQDTPVTAQTSIGDNGEIVESSVRYNPAIKGWRLTMRVKVKDAKKPTEMRAALATADKTLSETWSYQLPANE.

Positions 1-22 (MMKMRWLSAAVMLTLYTSSSWA) are cleaved as a signal peptide.

It belongs to the OpgD/OpgG family.

The protein localises to the periplasm. The protein operates within glycan metabolism; osmoregulated periplasmic glucan (OPG) biosynthesis. In terms of biological role, involved in the biosynthesis of osmoregulated periplasmic glucans (OPGs). The protein is Glucans biosynthesis protein G of Escherichia fergusonii (strain ATCC 35469 / DSM 13698 / CCUG 18766 / IAM 14443 / JCM 21226 / LMG 7866 / NBRC 102419 / NCTC 12128 / CDC 0568-73).